A 609-amino-acid polypeptide reads, in one-letter code: Zinc metalloproteinase-disintegrin-like VMP-III (609 aa).

An N-terminal signal peptide occupies residues M1–S20. Residues I21–A189 constitute a propeptide that is removed on maturation. The region spanning R198–P393 is the Peptidase M12B domain. The Ca(2+) site is built by E201 and D285. Disulfide bonds link C308–C388, C348–C372, and C350–C355. H333 lines the Zn(2+) pocket. Residue E334 is part of the active site. Positions 337 and 343 each coordinate Zn(2+). Residue N371 is glycosylated (N-linked (GlcNAc...) asparagine). Ca(2+) is bound by residues C388, N391, V403, N406, L408, E410, E413, and D416. The Disintegrin domain maps to P401–N487. 14 cysteine pairs are disulfide-bonded: C404–C433, C415–C428, C417–C423, C427–C450, C441–C447, C446–C472, C459–C479, C466–C498, C491–C503, C510–C560, C525–C571, C538–C548, C555–C597, and C591–C602. Positions E465 to D467 match the D/ECD-tripeptide motif. 5 residues coordinate Ca(2+): D467, P468, E470, D482, and V483.

The protein belongs to the venom metalloproteinase (M12B) family. P-III subfamily. P-IIIa sub-subfamily. Monomer. Zn(2+) serves as cofactor. Expressed by the venom gland.

It localises to the secreted. Functionally, snake venom metalloproteinase that impairs hemostasis in the envenomed animal. The protein is Zinc metalloproteinase-disintegrin-like VMP-III of Crotalus viridis viridis (Prairie rattlesnake).